Consider the following 386-residue polypeptide: Lipid-A-disaccharide synthase (386 aa).

Belongs to the LpxB family.

It catalyses the reaction a lipid X + a UDP-2-N,3-O-bis[(3R)-3-hydroxyacyl]-alpha-D-glucosamine = a lipid A disaccharide + UDP + H(+). It functions in the pathway bacterial outer membrane biogenesis; LPS lipid A biosynthesis. Its function is as follows. Condensation of UDP-2,3-diacylglucosamine and 2,3-diacylglucosamine-1-phosphate to form lipid A disaccharide, a precursor of lipid A, a phosphorylated glycolipid that anchors the lipopolysaccharide to the outer membrane of the cell. The sequence is that of Lipid-A-disaccharide synthase from Chromobacterium violaceum (strain ATCC 12472 / DSM 30191 / JCM 1249 / CCUG 213 / NBRC 12614 / NCIMB 9131 / NCTC 9757 / MK).